The chain runs to 440 residues: Virion host shutoff protein (440 aa).

Disordered regions lie at residues 98–144 and 265–312; these read NIDH…RRKT and IDEP…AGPG. The span at 266-281 shows a compositional bias: low complexity; the sequence is DEPPAASEESSASDQQ.

Belongs to the herpesviridae VHS protein family.

It is found in the virion. Minor structural protein that acts as an endoribonuclease during lytic infection. Degrades host mRNAs in the cytoplasm by cutting them at preferred sites, including some in regions of translation initiation. This Amazona oratrix (yellow-headed parrot) protein is Virion host shutoff protein (UL41).